The following is a 650-amino-acid chain: Macrolide export ATP-binding/permease protein MacB (650 aa).

In terms of domain architecture, ABC transporter spans 5–243; sequence LELKDIRRSY…AGGTEPVVNT (239 aa). 41 to 48 serves as a coordination point for ATP; the sequence is GASGSGKS. The next 5 helical transmembrane spans lie at 273–293, 523–543, 554–574, 580–600, and 613–633; these read LLTM…VVVG, LFLT…VMNI, ANDI…HLFF, VLPA…AFTL, and PLAL…FGWL.

Belongs to the ABC transporter superfamily. Macrolide exporter (TC 3.A.1.122) family. In terms of assembly, homodimer. Part of the tripartite efflux system MacAB-TolC, which is composed of an inner membrane transporter, MacB, a periplasmic membrane fusion protein, MacA, and an outer membrane component, TolC. The complex forms a large protein conduit and can translocate molecules across both the inner and outer membranes. Interacts with MacA.

It is found in the cell inner membrane. Functionally, part of the tripartite efflux system MacAB-TolC. MacB is a non-canonical ABC transporter that contains transmembrane domains (TMD), which form a pore in the inner membrane, and an ATP-binding domain (NBD), which is responsible for energy generation. Confers resistance against macrolides. The sequence is that of Macrolide export ATP-binding/permease protein MacB from Shigella dysenteriae serotype 1 (strain Sd197).